Consider the following 185-residue polypeptide: Ribosome-recycling factor (185 aa).

Belongs to the RRF family.

The protein resides in the cytoplasm. In terms of biological role, responsible for the release of ribosomes from messenger RNA at the termination of protein biosynthesis. May increase the efficiency of translation by recycling ribosomes from one round of translation to another. The chain is Ribosome-recycling factor from Mycolicibacterium vanbaalenii (strain DSM 7251 / JCM 13017 / BCRC 16820 / KCTC 9966 / NRRL B-24157 / PYR-1) (Mycobacterium vanbaalenii).